The sequence spans 89 residues: Cell division topological specificity factor (89 aa).

It belongs to the MinE family.

Functionally, prevents the cell division inhibition by proteins MinC and MinD at internal division sites while permitting inhibition at polar sites. This ensures cell division at the proper site by restricting the formation of a division septum at the midpoint of the long axis of the cell. The sequence is that of Cell division topological specificity factor from Pectobacterium carotovorum subsp. carotovorum (strain PC1).